The following is a 214-amino-acid chain: MADS-box protein SOC1 (214 aa).

An MADS-box domain is found at 3-57 (RGKTQMKRIENATSRQVTFSKRRNGLLKKAFELSVLCDAEVSLIIFSPKGKLYEF). Residues 87–177 (MQHLKYEAAN…SEKWGSHESE (91 aa)) form the K-box domain. A compositionally biased stretch (basic and acidic residues) spans 162-177 (AENEKLSEKWGSHESE). The disordered stretch occupies residues 162-214 (AENEKLSEKWGSHESEVWSNKNQESTGRGDEESSPSSEVETQLFIGLPCSSRK). Residues 178–187 (VWSNKNQEST) are compositionally biased toward polar residues.

In terms of assembly, forms a heterodimer with AGL24 through MADS-box domain. Interacts with AGL15, AGL16 and AGL19. Interacts with OXS3 in the nucleus. Widely expressed. Not found in the apical meristem of short-day grown plants in vegetative stage.

The protein localises to the nucleus. The protein resides in the cytoplasm. In terms of biological role, transcription activator active in flowering time control. May integrate signals from the photoperiod, vernalization and autonomous floral induction pathways. Can modulate class B and C homeotic genes expression. When associated with AGL24, mediates effect of gibberellins on flowering under short-day conditions, and regulates the expression of LEAFY (LFY), which links floral induction and floral development. The sequence is that of MADS-box protein SOC1 from Arabidopsis thaliana (Mouse-ear cress).